A 236-amino-acid chain; its full sequence is 3-deoxy-D-manno-octulosonic acid kinase (236 aa).

Residue Asp166 is part of the active site.

Belongs to the protein kinase superfamily. KdkA/RfaP family.

Its subcellular location is the cell inner membrane. It catalyses the reaction an alpha-Kdo-(2-&gt;6)-lipid IVA + ATP = a 4-O-phospho-alpha-Kdo-(2-&gt;6)-lipid IVA + ADP + H(+). It functions in the pathway bacterial outer membrane biogenesis; LPS core biosynthesis. Its function is as follows. Catalyzes the ATP-dependent phosphorylation of the 3-deoxy-D-manno-octulosonic acid (Kdo) residue in Kdo-lipid IV(A) at the 4-OH position. This is 3-deoxy-D-manno-octulosonic acid kinase from Photobacterium profundum (strain SS9).